Here is a 459-residue protein sequence, read N- to C-terminus: Trigger factor (459 aa).

Residues 161–246 (GDKVVIDFQG…IKKIMEGKLP (86 aa)) enclose the PPIase FKBP-type domain.

Belongs to the FKBP-type PPIase family. Tig subfamily.

Its subcellular location is the cytoplasm. It catalyses the reaction [protein]-peptidylproline (omega=180) = [protein]-peptidylproline (omega=0). In terms of biological role, involved in protein export. Acts as a chaperone by maintaining the newly synthesized protein in an open conformation. Functions as a peptidyl-prolyl cis-trans isomerase. In Legionella pneumophila (strain Corby), this protein is Trigger factor.